The following is a 72-amino-acid chain: Translation initiation factor IF-1 (72 aa).

Residues Met1–Lys72 enclose the S1-like domain.

It belongs to the IF-1 family. Component of the 30S ribosomal translation pre-initiation complex which assembles on the 30S ribosome in the order IF-2 and IF-3, IF-1 and N-formylmethionyl-tRNA(fMet); mRNA recruitment can occur at any time during PIC assembly.

It is found in the cytoplasm. One of the essential components for the initiation of protein synthesis. Stabilizes the binding of IF-2 and IF-3 on the 30S subunit to which N-formylmethionyl-tRNA(fMet) subsequently binds. Helps modulate mRNA selection, yielding the 30S pre-initiation complex (PIC). Upon addition of the 50S ribosomal subunit IF-1, IF-2 and IF-3 are released leaving the mature 70S translation initiation complex. This chain is Translation initiation factor IF-1, found in Burkholderia thailandensis (strain ATCC 700388 / DSM 13276 / CCUG 48851 / CIP 106301 / E264).